Here is a 784-residue protein sequence, read N- to C-terminus: MTKKLALKRRGKDSEPTNEVVASSEASENEEEEEDLLQAVKDPGEDSTDDEGIDQEYHSDSSEELQFESDEEGNYLGRKQSSSAEEDEESSDEEDNEEEESTDGEEVEDEEKDSKSKQTDDKPSGSGAASKKALTAELPKRDSSKPEYQDSDTSDEEDIRNTVGNIPMHWYDEYKHIGYDWDAKKIIKPPQGDQIDEFLRKIEDPDFWRTVKDPLTGQDVRLTDEDIALIKRIVSGRIPNKDHEEYEPWIEWFTSEVEKMPIKNVPDHKRSFLPSVSEKKRVSRMVHALKMGWMKTTEEVEREKQAKRGPKFYMLWETDTSREHMRRIHDPVSAPKRDLPGHAESYNPPPEYLFDAKETKEWLKLKDEPHKRKLHFMPQKFKSLREVPAYSRYLRERFLRCLDLYLCPRAKRVKLNIDAEYLIPKLPSPRDLQPFPTVESMVYRGHTDLVRSVSVEPKGEYLVSGSDDKTVKIWEIATGRCIRTIETDEVVRCVAWCPNPKLSIIAVATGNRLLLVNPKVGDKVLVKKTDDLLAEAPSQDVIESERIKTAVQWSNAEADEQEKGVRVVITHFKPIRQVTWHGRGDYLATVMPEGANRSALIHQLSKRRSQIPFSKSKGLIQFVLFHPVKPCFFVATQHNIRIYDLVKQELVKKLLTNSKWISGMSIHPKGDNLLVSTYDKKMLWFDLDLSTKPYQTMRLHRNAVRSVAFHLRYPLFASGSDDQAVIVSHGMVYNDLLQNPLIVPLKKLQTHEKRDEFGVLDVNWHPVQPWVFSTGADSTIRLYT.

Positions 1 to 11 (MTKKLALKRRG) are enriched in basic residues. Residues 1 to 159 (MTKKLALKRR…DSDTSDEEDI (159 aa)) form a disordered region. Acidic residues-rich tracts occupy residues 27–36 (SENEEEEEDL), 45–54 (EDSTDDEGID), 62–73 (SEELQFESDEEG), and 84–111 (AEED…EDEE). Basic and acidic residues-rich tracts occupy residues 112 to 123 (KDSKSKQTDDKP) and 138 to 148 (LPKRDSSKPEY). A compositionally biased stretch (acidic residues) spans 149–158 (QDSDTSDEED). 7 WD repeats span residues 445-486 (GHTD…RTIE), 488-526 (DEVV…KVLV), 570-612 (THFK…SQIP), 615-653 (KSKG…LVKK), 656-695 (TNSK…KPYQ), 699-738 (LHRN…DLLQ), and 754-784 (RDEF…RLYT).

The protein belongs to the WD repeat BOP1/ERB1 family.

The protein resides in the nucleus. It is found in the nucleolus. The protein localises to the nucleoplasm. In terms of biological role, required for maturation of ribosomal RNAs and formation of the large ribosomal subunit. The polypeptide is Ribosome biogenesis protein BOP1 homolog (Drosophila melanogaster (Fruit fly)).